We begin with the raw amino-acid sequence, 388 residues long: P2X purinoceptor 4 (388 aa).

At 1–33 the chain is on the cytoplasmic side; the sequence is MAGCCSVLGSFLFEYDTPRIVLIRSRKVGLMNR. A helical membrane pass occupies residues 34–54; it reads AVQLLILAYVIGWVFVWEKGY. Topologically, residues 55–338 are extracellular; it reads QETDSVVSSV…KFDIIPTMIN (284 aa). Residues lysine 67 and lysine 69 each coordinate ATP. The CTP site is built by lysine 67 and lysine 69. N-linked (GlcNAc...) asparagine glycosylation is found at asparagine 75 and asparagine 110. 3 cysteine pairs are disulfide-bonded: cysteine 116–cysteine 165, cysteine 126–cysteine 149, and cysteine 132–cysteine 159. Residues asparagine 153 and asparagine 184 are each glycosylated (N-linked (GlcNAc...) asparagine). Residues threonine 186 and leucine 188 each contribute to the ATP site. A CTP-binding site is contributed by threonine 186. 2 N-linked (GlcNAc...) asparagine glycosylation sites follow: asparagine 199 and asparagine 208. Cystine bridges form between cysteine 217–cysteine 227 and cysteine 261–cysteine 270. ATP-binding residues include asparagine 293, arginine 295, and lysine 313. 3 residues coordinate CTP: asparagine 293, arginine 295, and lysine 313. A helical membrane pass occupies residues 339 to 359; that stretch reads VGSGLALLGVATVLCDVIVLY. At 360–388 the chain is on the cytoplasmic side; that stretch reads CMKKKYYYRDKKYKYVEDYEQGLSGEMNQ.

The protein belongs to the P2X receptor family. Functional P2RXs are organized as homomeric and heteromeric trimers. Forms heterotrimer with P2RX1. Interacts with P2RX7 (via C-terminus); this interaction is functional only in the presence of ATP. Forms heterotrimer with P2RX4; functional differences between homomeric P2RX4 and P2RX4/6 heterotrimer are minor. Interacts with AP1M2. As to expression, widespread distribution in the brain. Strongly expressed in microglial cells. Also expressed in epithelial cells.

It localises to the cell membrane. Its subcellular location is the lysosome membrane. It catalyses the reaction K(+)(in) = K(+)(out). The catalysed reaction is Na(+)(in) = Na(+)(out). The enzyme catalyses Ca(2+)(in) = Ca(2+)(out). Activated by ATP. pH-dependent and inhibited by acidic pH. Functionally, ATP-gated nonselective transmembrane cation channel permeable to potassium, sodium and calcium. CTP, but not GTP or UTP, functions as a weak affinity agonist for P2RX4. Activated by extracellularly released ATP, it plays multiple role in immunity and central nervous system physiology. Plays a key role in initial steps of T-cell activation and Ca(2+) microdomain formation. Also participates in basal T-cell activity without TCR/CD3 stimulation. Promotes the differentiation and activation of Th17 cells via expression of retinoic acid-related orphan receptor C/RORC. Upon activation, drives microglia motility via the PI3K/Akt pathway. Could also function as an ATP-gated cation channel of lysosomal membranes. In Rattus norvegicus (Rat), this protein is P2X purinoceptor 4 (P2rx4).